A 1110-amino-acid chain; its full sequence is Guanylate cyclase 2D (1110 aa).

The N-terminal stretch at 1 to 66 (MAGLQQGCHP…ADSLSLPAWA (66 aa)) is a signal peptide. The Extracellular portion of the chain corresponds to 67 to 475 (RETFTLGVLG…PNTLCIRGVQ (409 aa)). Cysteine 121 and cysteine 149 are oxidised to a cystine. Residues asparagine 304 and asparagine 374 are each glycosylated (N-linked (GlcNAc...) asparagine). The chain crosses the membrane as a helical span at residues 476-500 (PLGSLLTLTITCVLALVGGFLAYFI). Topologically, residues 501 to 1110 (RLGLQQLRLL…TGFAKLARVG (610 aa)) are cytoplasmic. Residues 529-556 (TPSRRRPHVDSGSESRSVVDGGSPQSVI) are disordered. The region spanning 541–818 (SESRSVVDGG…PSLDQIYTQF (278 aa)) is the Protein kinase domain. An interaction with NCALD region spans residues 880–921 (MGTTVEPEYFDQVTIYFSDIVGFTTISALSEPIEVVGFLNDL). The Guanylate cyclase domain occupies 893-1023 (TIYFSDIVGF…DTVNTASRME (131 aa)).

Belongs to the adenylyl cyclase class-4/guanylyl cyclase family. In terms of assembly, interacts (via the catalytic domain) with NCALD. Specifically expressed in a subpopulation of olfactory sensory neurons. Expressed in the cilia of the olfactory epithelium.

The protein localises to the cell projection. The protein resides in the cilium membrane. It catalyses the reaction GTP = 3',5'-cyclic GMP + diphosphate. Activated by Ca(2+). Activated by NCALD in a Ca(2+)-dependent fashion. Functionally, functions as an olfactory receptor activated by a urine odorant, uroguanylin. Activated as well by the volatile semiochemicals carbon disulfide (CS2) and carbon dioxide (CO2). Has guanylate cyclase activity upon binding of the ligand. Activation of GUCY2D neurons leads to the cGMP-dependent activation of the CNGA3 channels, membrane depolarization and an increase in action potential frequency. Signaling pathways activated by GUCY2D may trigger social behaviors such as acquisition of food preference. In Rattus norvegicus (Rat), this protein is Guanylate cyclase 2D (Gucy2d).